Here is a 90-residue protein sequence, read N- to C-terminus: DNA-binding protein HU-beta (90 aa).

The protein belongs to the bacterial histone-like protein family. Heterodimer of an alpha and a beta chain.

Its function is as follows. Histone-like DNA-binding protein which is capable of wrapping DNA to stabilize it, and thus to prevent its denaturation under extreme environmental conditions. The protein is DNA-binding protein HU-beta (hupB) of Escherichia coli O6:H1 (strain CFT073 / ATCC 700928 / UPEC).